A 201-amino-acid chain; its full sequence is Small ribosomal subunit protein uS4c (201 aa).

The S4 RNA-binding domain maps to 90-153 (MRLDNVIFRL…SSQNLVKRYL (64 aa)).

This sequence belongs to the universal ribosomal protein uS4 family. Part of the 30S ribosomal subunit. Contacts protein S5. The interaction surface between S4 and S5 is involved in control of translational fidelity.

Its subcellular location is the plastid. It localises to the chloroplast. Functionally, one of the primary rRNA binding proteins, it binds directly to 16S rRNA where it nucleates assembly of the body of the 30S subunit. Its function is as follows. With S5 and S12 plays an important role in translational accuracy. The polypeptide is Small ribosomal subunit protein uS4c (rps4) (Gracilaria tenuistipitata var. liui (Red alga)).